A 316-amino-acid chain; its full sequence is Transcription initiation factor IIB (316 aa).

Residues 11 to 42 form a TFIIB-type zinc finger; it reads PRVTCPNHPDAILVEDYRAGDMICPECGLVVG. Residues Cys15, His18, Cys34, and Cys37 each coordinate Zn(2+). A phosphoserine mark is found at Ser70, Ser76, and Ser92. 2 consecutive repeat copies span residues 124 to 200 and 218 to 294. Residues Lys152, Arg154, Lys189, and Lys196 each contribute to the DNA site. Residues 189–193 are core promoter DNA-binding; it reads KEIGR. Lys238 is modified (N6-acetyllysine; by autocatalysis). The interval 244–316 is necessary for TATA box-bound complex TBP formation; that stretch reads LVPGRSPISV…DTPVDKLPQL (73 aa). Arg248 contacts DNA. A core promoter DNA-binding region spans residues 249 to 252; sequence SPIS. Residues Lys272, Ala281, Thr284, Arg286, and Arg290 each contribute to the DNA site. Residues 283-286 form a core promoter DNA-binding region; the sequence is VTIR.

This sequence belongs to the TFIIB family. As to quaternary structure, found in a ternary complex with TATA box-bound TBP. Part of a TFIID-containing RNA polymerase II pre-initiation complex (PIC) that is composed of TBP and at least GTF2A1, GTF2A2, GTF2E1, GTF2E2, GTF2F1, GTF2H2, GTF2H3, GTF2H4, GTF2H5, GTF2B, TCEA1, ERCC2, ERCC3, TAF1, TAF2, TAF3, TAF4, TAF5, TAF6, TAF7, TAF8, TAF9, TAF10, TAF11, TAF12 and TAF13. Associates with TFIID-TFIIA (DA complex) to form TFIID-TFIIA-TFIIB (DAB complex), which is then recognized by RNA polymerase II (Pol II). Found in a RNA polymerase II initiation complex. Interacts (via C-terminus) with TBP; this interaction with TATA box-bound TBP guides Pol II into the PIC. Interacts (via N-terminus) with Pol II. Interacts (via C-terminus) with SSU72; this interaction is inhibited by SYMPK. Interacts with NR2F1; this interaction is direct. Interacts with PGR. Interacts with ESR1. Interacts with GTF2F1 (via C-terminus and preferentially via acetylated form); this interaction prevents binding of GTF2B to GTF2F2. Interacts with GTF2F2 (via N-terminus); this interaction is inhibited in presence of GTF2F1. Interacts with the transcription elongation factor TCEA2. Interacts with HSF1 (via transactivation domain). Interacts with GPBP1. Post-translationally, acetylated. Autoacetylated; autoacetylation at Lys-238 stimulates transcription activation.

Its subcellular location is the nucleus. It localises to the chromosome. The enzyme catalyses L-lysyl-[protein] + acetyl-CoA = N(6)-acetyl-L-lysyl-[protein] + CoA + H(+). In terms of biological role, general transcription factor that plays a role in transcription initiation by RNA polymerase II (Pol II). Involved in the pre-initiation complex (PIC) formation and Pol II recruitment at promoter DNA. Together with the TATA box-bound TBP forms the core initiation complex and provides a bridge between TBP and the Pol II-TFIIF complex. Released from the PIC early following the onset of transcription during the initiation and elongation transition and reassociates with TBP during the next transcription cycle. Associates with chromatin to core promoter-specific regions. Binds to two distinct DNA core promoter consensus sequence elements in a TBP-independent manner; these IIB-recognition elements (BREs) are localized immediately upstream (BREu), 5'-[GC][GC][GA]CGCC-3', and downstream (BREd), 5'-[GA]T[TGA][TG][GT][TG][TG]-3', of the TATA box element. Modulates transcription start site selection. Also exhibits autoacetyltransferase activity that contributes to the activated transcription. This is Transcription initiation factor IIB from Pongo abelii (Sumatran orangutan).